The primary structure comprises 368 residues: MEVVSELVQFMQPNQRLDLKAVALTHVLGLTGSAEGKAAILALDDMLMAIFGLTFDDNHTVAKDAVLSLINLTADEECATKVFHLAKRIQPPFAIVEVAATQISDEQSPLADPWSMVLSNLTRVESLVHEILDILERGEQTLPRLAKAFAQLDYNKKKARLHYLAPIFCNLTQVARGRELCCHARYQLLEKLLPFASYEENVVRRGGTIGILKNVCFDAVYHGVILGEDDNILVAILQPLCGPEEFSDEENDMLPIELQYLPESKTRETDPDLRKMLLECLLQLCSTRRSREILRAKGVYEILREYHKWEARVGLDRDCLLACENVVDILIKKEEEIGLDNYKNVEVPAEQAEKFVQEDVEYVKSLLD.

Belongs to the HGH1 family.

The polypeptide is Protein HGH1 homolog (Drosophila pseudoobscura pseudoobscura (Fruit fly)).